The chain runs to 1363 residues: Spike glycoprotein (1363 aa).

A signal peptide spans 1-13 (MFLILLISLPTAF). The Extracellular portion of the chain corresponds to 14–1307 (AVIGDLKCTT…GTYEYYVKWP (1294 aa)). Residues 15–298 (VIGDLKCTTV…DFMSEIKCKT (284 aa)) enclose the BetaCoV S1-NTD domain. Disulfide bonds link Cys-21–Cys-165, Cys-160–Cys-193, Cys-172–Cys-252, Cys-286–Cys-296, and Cys-331–Cys-356. 2 N-linked (GlcNAc...) asparagine; by host glycosylation sites follow: Asn-59 and Asn-133. Asn-198 is a glycosylation site (N-linked (GlcNAc...) asparagine; by host). Residues 329 to 617 (PDCNIEAWLN…DVNSGTTCST (289 aa)) enclose the BetaCoV S1-CTD domain. Asn-359 is a glycosylation site (N-linked (GlcNAc...) asparagine; by host). 2 disulfide bridges follow: Cys-374-Cys-427 and Cys-386-Cys-615. Asn-437, Asn-649, Asn-676, Asn-696, Asn-714, Asn-739, and Asn-788 each carry an N-linked (GlcNAc...) asparagine; by host glycan. Fusion peptide regions lie at residues 914-935 (SAIE…VEAY) and 933-953 (EAYN…VQSY). Asn-937 is a glycosylation site (N-linked (GlcNAc...) asparagine; by host). Cys-938 and Cys-949 are disulfide-bonded. Residues 1014-1064 (QKLIANAFNNALGAIQEGFDATNSALVKIQAVVNANAEALNNLLQQLSNRF) are heptad repeat 1. A coiled-coil region spans residues 1043-1087 (QAVVNANAEALNNLLQQLSNRFGAISSSLQEILSRLDALEAQAQI). 6 N-linked (GlcNAc...) asparagine; by host glycosylation sites follow: Asn-1194, Asn-1224, Asn-1234, Asn-1253, Asn-1267, and Asn-1288. The segment at 1258-1296 (APDLSLDYINVTFLDLQDEMNRLQEAIKVLNQSYINLKD) is heptad repeat 2. Positions 1269-1297 (TFLDLQDEMNRLQEAIKVLNQSYINLKDI) form a coiled coil. A helical membrane pass occupies residues 1308–1328 (WYVWLLIGFAGVAMLVLLFFI). The Cytoplasmic segment spans residues 1329 to 1363 (CCCTGCGTSCFKKCGGCCDDYTGHQELVIKTSHDD). Residues 1359–1363 (TSHDD) carry the KxHxx motif.

It belongs to the betacoronaviruses spike protein family. In terms of assembly, homotrimer; each monomer consists of a S1 and a S2 subunit. The resulting peplomers protrude from the virus surface as spikes. Post-translationally, specific enzymatic cleavages in vivo yield mature proteins. The precursor is processed into S1 and S2 by host cell furin or another cellular protease to yield the mature S1 and S2 proteins. Additionally, a second cleavage leads to the release of a fusion peptide after viral attachment to host cell receptor. In terms of processing, the cytoplasmic Cys-rich domain is palmitoylated. Spike glycoprotein is digested within host endosomes.

Its subcellular location is the virion membrane. The protein localises to the host endoplasmic reticulum-Golgi intermediate compartment membrane. The protein resides in the host cell membrane. Its function is as follows. Attaches the virion to the cell membrane by interacting with host receptor, initiating the infection. Mediates fusion of the virion and cellular membranes by acting as a class I viral fusion protein. Under the current model, the protein has at least three conformational states: pre-fusion native state, pre-hairpin intermediate state, and post-fusion hairpin state. During viral and target cell membrane fusion, the coiled coil regions (heptad repeats) assume a trimer-of-hairpins structure, positioning the fusion peptide in close proximity to the C-terminal region of the ectodomain. The formation of this structure appears to drive apposition and subsequent fusion of viral and target cell membranes. Functionally, acts as a viral fusion peptide which is unmasked following S2 cleavage occurring upon virus endocytosis. This chain is Spike glycoprotein, found in Bos taurus (Bovine).